Consider the following 168-residue polypeptide: 2-C-methyl-D-erythritol 2,4-cyclodiphosphate synthase (168 aa).

Positions 13 and 15 each coordinate a divalent metal cation. 4-CDP-2-C-methyl-D-erythritol 2-phosphate-binding positions include 13 to 15 (DVH) and 39 to 40 (HS). A divalent metal cation is bound at residue histidine 47. Residues 61–63 (DIG), 66–70 (FPDTD), phenylalanine 144, and arginine 147 contribute to the 4-CDP-2-C-methyl-D-erythritol 2-phosphate site.

The protein belongs to the IspF family. Homotrimer. The cofactor is a divalent metal cation.

The enzyme catalyses 4-CDP-2-C-methyl-D-erythritol 2-phosphate = 2-C-methyl-D-erythritol 2,4-cyclic diphosphate + CMP. Its pathway is isoprenoid biosynthesis; isopentenyl diphosphate biosynthesis via DXP pathway; isopentenyl diphosphate from 1-deoxy-D-xylulose 5-phosphate: step 4/6. Its function is as follows. Involved in the biosynthesis of isopentenyl diphosphate (IPP) and dimethylallyl diphosphate (DMAPP), two major building blocks of isoprenoid compounds. Catalyzes the conversion of 4-diphosphocytidyl-2-C-methyl-D-erythritol 2-phosphate (CDP-ME2P) to 2-C-methyl-D-erythritol 2,4-cyclodiphosphate (ME-CPP) with a corresponding release of cytidine 5-monophosphate (CMP). This Ralstonia nicotianae (strain ATCC BAA-1114 / GMI1000) (Ralstonia solanacearum) protein is 2-C-methyl-D-erythritol 2,4-cyclodiphosphate synthase.